The sequence spans 340 residues: Alcohol dehydrogenase (340 aa).

Zn(2+) contacts are provided by Cys-37, His-58, Cys-89, Cys-92, Cys-95, Cys-103, and Cys-145.

The protein belongs to the zinc-containing alcohol dehydrogenase family. Requires Zn(2+) as cofactor.

It carries out the reaction a primary alcohol + NAD(+) = an aldehyde + NADH + H(+). The enzyme catalyses a secondary alcohol + NAD(+) = a ketone + NADH + H(+). This is Alcohol dehydrogenase (adh) from Staphylococcus epidermidis (strain ATCC 12228 / FDA PCI 1200).